The primary structure comprises 427 residues: Acyl-CoA hydrolase 2 (427 aa).

15–83 (LLQKLPSSSL…FLLKQYDYFG (69 aa)) is an a nucleoside 3',5'-cyclic phosphate binding site. Active-site charge relay system residues include Asp337, Ser359, and Gln409. The Microbody targeting signal signature appears at 425–427 (SKL).

Belongs to the C/M/P thioester hydrolase family. Homotetramer. As to expression, mostly expressed in leaves and flowers, and, to a lower extent, in seedlings and siliques.

The protein resides in the peroxisome matrix. The enzyme catalyses a fatty acyl-CoA + H2O = a fatty acid + CoA + H(+). The catalysed reaction is dodecanoyl-CoA + H2O = dodecanoate + CoA + H(+). It catalyses the reaction tetradecanoyl-CoA + H2O = tetradecanoate + CoA + H(+). It carries out the reaction octadecanoyl-CoA + H2O = octadecanoate + CoA + H(+). The enzyme catalyses (9Z)-hexadecenoyl-CoA + H2O = (9Z)-hexadecenoate + CoA + H(+). The catalysed reaction is (5Z,8Z,11Z,14Z)-eicosatetraenoyl-CoA + H2O = (5Z,8Z,11Z,14Z)-eicosatetraenoate + CoA + H(+). It catalyses the reaction hexadecanoyl-CoA + H2O = hexadecanoate + CoA + H(+). It carries out the reaction (9Z)-octadecenoyl-CoA + H2O = (9Z)-octadecenoate + CoA + H(+). The enzyme catalyses (9Z,12Z)-octadecadienoyl-CoA + H2O = (9Z,12Z)-octadecadienoate + CoA + H(+). Its pathway is lipid metabolism; fatty acid metabolism. Its activity is regulated as follows. Insensitive to feedback inhibition by free coenzyme A (CoASH). Functionally, catalyzes the hydrolysis of acyl-CoAs into free fatty acids and coenzyme A (CoASH), regulating their respective intracellular levels. Active with both medium chain and long chain acyl-CoAs (e.g. 12:0-CoA, 14:0-CoA, 16:0-CoA, 18:0-CoA, 16:1-CoA, 18:1-CoA, 18:2-CoA and 20:4-CoA) as substrates, palmitoleoyl-CoA (16:1-CoA) being the favorite substrate. In Arabidopsis thaliana (Mouse-ear cress), this protein is Acyl-CoA hydrolase 2.